The following is a 340-amino-acid chain: uncharacterized protein (340 aa).

The first 23 residues, 1–23, serve as a signal peptide directing secretion; sequence MQKKVLSLVLVLAVLESIVPVSA.

This is an uncharacterized protein from Archaeoglobus fulgidus (strain ATCC 49558 / DSM 4304 / JCM 9628 / NBRC 100126 / VC-16).